The primary structure comprises 470 residues: Glutamate--tRNA ligase (470 aa).

A 'HIGH' region motif is present at residues 9–19 (PSPTGFLHVGG). The 'KMSKS' region motif lies at 236 to 240 (RLSKR). Lysine 239 provides a ligand contact to ATP.

Belongs to the class-I aminoacyl-tRNA synthetase family. Glutamate--tRNA ligase type 1 subfamily. As to quaternary structure, monomer.

It localises to the cytoplasm. It catalyses the reaction tRNA(Glu) + L-glutamate + ATP = L-glutamyl-tRNA(Glu) + AMP + diphosphate. Functionally, catalyzes the attachment of glutamate to tRNA(Glu) in a two-step reaction: glutamate is first activated by ATP to form Glu-AMP and then transferred to the acceptor end of tRNA(Glu). This chain is Glutamate--tRNA ligase, found in Legionella pneumophila (strain Corby).